The following is a 366-amino-acid chain: Inhibin alpha chain (366 aa).

The signal sequence occupies residues 1 to 18 (MVLHLLLFLLLTPQGGHS). Residues 19-61 (CQGLELARELVLAKVRALFLDALGPPAVTREGGDPGVRRLPRR) constitute a propeptide that is removed on maturation. The propeptide at 62–232 (HALGGFTHRG…PPSGGERARR (171 aa)) is inhibin alpha N-terminal region. N-linked (GlcNAc...) asparagine glycans are attached at residues asparagine 146 and asparagine 268. 3 disulfides stabilise this stretch: cysteine 262–cysteine 328, cysteine 291–cysteine 363, and cysteine 295–cysteine 365. A glycan (N-linked (GlcNAc...) asparagine; partial) is linked at asparagine 302.

It belongs to the TGF-beta family. In terms of assembly, dimeric, linked by one or more disulfide bonds. Activin B is a dimer of alpha and beta-B. Inhibin A is a dimer of alpha and beta-A. Inhibin B is a dimer of alpha and beta-B. Interacts with TGFBR3L; this interaction regulates female fertility. Proteolytic processing yields a number of bioactive forms. The 20/23 kDa forms consist solely of the mature alpha chain, the 26/29 kDa forms consist of the most N-terminal propeptide linked through a disulfide bond to the mature alpha chain, the 50/53 kDa forms encompass the entire proprotein. Each type can be furthermore either mono- or diglycosylated, causing the mass difference. In terms of tissue distribution, originally found in ovary (granulosa cells) and testis (Sertoli cells), but widely distributed in many tissues including brain and placenta. In adrenal cortex expression is limited to the zona reticularis and the innermost zona fasciculata in the normal gland, extending centripetally into the zona fasciculata in hyperplasia. Also found in adrenocortical tumors. Also expressed in prostate epithelium of benign prostatic hyperplasia, in regions of basal cell hyperplasia and in nonmalignant regions of high grade prostate cancer. Only circulating inhibin B is found in male, whereas circulating inhibins A and B are found in female.

It localises to the secreted. Inhibins and activins inhibit and activate, respectively, the secretion of follitropin by the pituitary gland. Inhibins/activins are involved in regulating a number of diverse functions such as hypothalamic and pituitary hormone secretion, gonadal hormone secretion, germ cell development and maturation, erythroid differentiation, insulin secretion, nerve cell survival, embryonic axial development or bone growth, depending on their subunit composition. Inhibins appear to oppose the functions of activins. Functionally, inhibin A is a dimer of alpha/INHA and beta-A/INHBA that functions as a feedback regulator in the hypothalamic-pituitary-gonadal (HPG) axis. Inhibits the secretion of FSH from the anterior pituitary gland by acting on pituitary gonadotrope cells. Antagonizes activin A by binding to the proteoglycan, betaglycan, and forming a stable complex with and, thereby, sequestering type II activin receptors while excluding type I receptor. In terms of biological role, inhibin B is a dimer of alpha and beta-B that plays a crucial role in the regulation of the reproductive system by inhibiting the secretion of follicle-stimulating hormone (FSH) from the anterior pituitary gland. Thereby, maintains reproductive homeostasis in both males and females. Acts as a more potent suppressor of FSH release than inhibin A. Functions as competitive receptor antagonist binding activin type II receptors with high affinity in the presence of the TGF-beta type III coreceptor/TGFBR3L. The sequence is that of Inhibin alpha chain (INHA) from Homo sapiens (Human).